The primary structure comprises 592 residues: E3 ubiquitin-protein ligase RNF180 (592 aa).

Residues 1–564 are Cytoplasmic-facing; that stretch reads MKRSKELITK…DSRGWWFDMD (564 aa). A Phosphoserine modification is found at S230. An RING-type zinc finger spans residues 432 to 474; it reads CAVCLDVYFNPYMCYPCRHIFCEPCLRTLAKDNPSSTPCPLCR. The chain crosses the membrane as a helical span at residues 565–585; the sequence is MVIIYIYSVNWVIGFIVFCFL. Residues 586–592 lie on the Extracellular side of the membrane; it reads CYFFFPF.

Interacts with ZIC2.

Its subcellular location is the endoplasmic reticulum membrane. The protein localises to the nucleus envelope. The enzyme catalyses S-ubiquitinyl-[E2 ubiquitin-conjugating enzyme]-L-cysteine + [acceptor protein]-L-lysine = [E2 ubiquitin-conjugating enzyme]-L-cysteine + N(6)-ubiquitinyl-[acceptor protein]-L-lysine.. It participates in protein modification; protein ubiquitination. Its function is as follows. E3 ubiquitin-protein ligase which promotes polyubiquitination and degradation by the proteasome pathway of ZIC2. This chain is E3 ubiquitin-protein ligase RNF180 (RNF180), found in Pongo abelii (Sumatran orangutan).